Consider the following 168-residue polypeptide: Siroheme decarboxylase NirH subunit (168 aa).

It belongs to the Ahb/Nir family. As to quaternary structure, probably forms a complex composed of NirD, NirL, NirG and NirH. All proteins are required for the total conversion of siroheme to didecarboxysiroheme.

The enzyme catalyses siroheme + 2 H(+) = 12,18-didecarboxysiroheme + 2 CO2. It functions in the pathway porphyrin-containing compound metabolism. Functionally, involved in heme d1 biosynthesis. Catalyzes the decarboxylation of siroheme into didecarboxysiroheme. The chain is Siroheme decarboxylase NirH subunit from Stutzerimonas stutzeri (Pseudomonas stutzeri).